Consider the following 44-residue polypeptide: Large ribosomal subunit protein bL34 (44 aa).

The interval 21–44 is disordered; the sequence is RMDTSGGRRILSARRRKGRKTISA. Residues 31–44 are compositionally biased toward basic residues; sequence LSARRRKGRKTISA.

This sequence belongs to the bacterial ribosomal protein bL34 family.

This is Large ribosomal subunit protein bL34 from Endomicrobium trichonymphae.